Here is a 423-residue protein sequence, read N- to C-terminus: Glucose-6-phosphate isomerase (423 aa).

The active-site Proton donor is the glutamate 279. Residues histidine 300 and lysine 413 contribute to the active site.

Belongs to the GPI family.

It localises to the cytoplasm. The catalysed reaction is alpha-D-glucose 6-phosphate = beta-D-fructose 6-phosphate. The protein operates within carbohydrate biosynthesis; gluconeogenesis. It functions in the pathway carbohydrate degradation; glycolysis; D-glyceraldehyde 3-phosphate and glycerone phosphate from D-glucose: step 2/4. Its function is as follows. Catalyzes the reversible isomerization of glucose-6-phosphate to fructose-6-phosphate. The protein is Glucose-6-phosphate isomerase of Acholeplasma laidlawii (strain PG-8A).